We begin with the raw amino-acid sequence, 724 residues long: Catalase-peroxidase (724 aa).

Residues 1–20 form a disordered region; it reads MDENKTKPAGKCPVMHGGNT. Positions 98–225 form a cross-link, tryptophyl-tyrosyl-methioninium (Trp-Tyr) (with M-251); that stretch reads WHSAGTYRTA…LAAVQMGLIY (128 aa). Catalysis depends on H99, which acts as the Proton acceptor. The segment at residues 225 to 251 is a cross-link (tryptophyl-tyrosyl-methioninium (Tyr-Met) (with W-98)); sequence YVNPEGVDGNPDPLRTAQDMRVTFSRM. H266 serves as a coordination point for heme b.

This sequence belongs to the peroxidase family. Peroxidase/catalase subfamily. As to quaternary structure, homodimer or homotetramer. The cofactor is heme b. In terms of processing, formation of the three residue Trp-Tyr-Met cross-link is important for the catalase, but not the peroxidase activity of the enzyme.

The catalysed reaction is H2O2 + AH2 = A + 2 H2O. It carries out the reaction 2 H2O2 = O2 + 2 H2O. Bifunctional enzyme with both catalase and broad-spectrum peroxidase activity. This Pectobacterium carotovorum subsp. carotovorum (strain PC1) protein is Catalase-peroxidase.